Consider the following 483-residue polypeptide: Glycogen synthase (483 aa).

ADP-alpha-D-glucose is bound at residue Lys15.

Belongs to the glycosyltransferase 1 family. Bacterial/plant glycogen synthase subfamily.

The enzyme catalyses [(1-&gt;4)-alpha-D-glucosyl](n) + ADP-alpha-D-glucose = [(1-&gt;4)-alpha-D-glucosyl](n+1) + ADP + H(+). Its pathway is glycan biosynthesis; glycogen biosynthesis. Functionally, synthesizes alpha-1,4-glucan chains using ADP-glucose. In Petrotoga mobilis (strain DSM 10674 / SJ95), this protein is Glycogen synthase.